Consider the following 402-residue polypeptide: Multidrug resistance protein MdtH (402 aa).

At 1-12 the chain is on the cytoplasmic side; that stretch reads MSRVSQARNLGK. Residues 13-33 form a helical membrane-spanning segment; the sequence is YFLLIDNMLVVLGFFVVFPLI. The Periplasmic segment spans residues 34–98; that stretch reads SIRFVDQMGW…GFATMGIAHE (65 aa). A helical membrane pass occupies residues 99–116; the sequence is PWLLWFSCLLSGLGGTLF. The Cytoplasmic segment spans residues 117-138; it reads DPPRSALVVKLIRPQQRGRFFS. Residues 139 to 159 form a helical membrane-spanning segment; the sequence is LLMMQDSAGAVIGALLGSWLL. Residues 160-164 are Periplasmic-facing; sequence QYDFR. A helical transmembrane segment spans residues 165-185; the sequence is LVCATGAVLFVLCAAFNAWLL. The Cytoplasmic portion of the chain corresponds to 186–213; it reads PAWKLSTVRTPVREGMTRVMRDKRFVTY. A helical membrane pass occupies residues 214–234; it reads VLTLAGYYMLAVQVMLMLPIM. At 235-243 the chain is on the periplasmic side; the sequence is VNDVAGAPS. Residues 244–264 traverse the membrane as a helical segment; the sequence is AVKWMYAIEACLSLTLLYPIA. Residues 265-276 lie on the Cytoplasmic side of the membrane; that stretch reads RWSEKHFRLEHR. A helical membrane pass occupies residues 277–297; it reads LMAGLLIMSLSMMPVGMVSGL. Residues 298–299 lie on the Periplasmic side of the membrane; it reads QQ. The helical transmembrane segment at 300-320 threads the bilayer; it reads LFTLICLFYIGSIIAEPARET. At 321–339 the chain is on the cytoplasmic side; the sequence is LSASLADARARGSYMGFSR. Residues 340–360 form a helical membrane-spanning segment; it reads LGLAIGGAIGYIGGGWLFDLG. The Periplasmic segment spans residues 361–367; the sequence is KSAHQPE. Residues 368–388 traverse the membrane as a helical segment; the sequence is LPWMMLGIIGIFTFLALGWQF. Over 389–402 the chain is Cytoplasmic; the sequence is SQKRAARRLLERDA.

Belongs to the major facilitator superfamily. DHA1 family. MdtH (TC 2.A.1.2.21) subfamily.

Its subcellular location is the cell inner membrane. Its function is as follows. Confers resistance to norfloxacin and enoxacin. This Escherichia coli O139:H28 (strain E24377A / ETEC) protein is Multidrug resistance protein MdtH.